We begin with the raw amino-acid sequence, 319 residues long: 4-hydroxy-3-methylbut-2-enyl diphosphate reductase (319 aa).

Cys17 lines the [4Fe-4S] cluster pocket. His46 and His79 together coordinate (2E)-4-hydroxy-3-methylbut-2-enyl diphosphate. His46 and His79 together coordinate dimethylallyl diphosphate. The isopentenyl diphosphate site is built by His46 and His79. Residue Cys101 coordinates [4Fe-4S] cluster. His129 provides a ligand contact to (2E)-4-hydroxy-3-methylbut-2-enyl diphosphate. His129 contacts dimethylallyl diphosphate. His129 provides a ligand contact to isopentenyl diphosphate. The Proton donor role is filled by Glu131. Thr170 provides a ligand contact to (2E)-4-hydroxy-3-methylbut-2-enyl diphosphate. Residue Cys200 participates in [4Fe-4S] cluster binding. Residues Ser228, Ser229, Asn230, and Ser273 each coordinate (2E)-4-hydroxy-3-methylbut-2-enyl diphosphate. Ser228, Ser229, Asn230, and Ser273 together coordinate dimethylallyl diphosphate. Residues Ser228, Ser229, Asn230, and Ser273 each coordinate isopentenyl diphosphate.

The protein belongs to the IspH family. [4Fe-4S] cluster serves as cofactor.

It catalyses the reaction isopentenyl diphosphate + 2 oxidized [2Fe-2S]-[ferredoxin] + H2O = (2E)-4-hydroxy-3-methylbut-2-enyl diphosphate + 2 reduced [2Fe-2S]-[ferredoxin] + 2 H(+). It carries out the reaction dimethylallyl diphosphate + 2 oxidized [2Fe-2S]-[ferredoxin] + H2O = (2E)-4-hydroxy-3-methylbut-2-enyl diphosphate + 2 reduced [2Fe-2S]-[ferredoxin] + 2 H(+). The protein operates within isoprenoid biosynthesis; dimethylallyl diphosphate biosynthesis; dimethylallyl diphosphate from (2E)-4-hydroxy-3-methylbutenyl diphosphate: step 1/1. Its pathway is isoprenoid biosynthesis; isopentenyl diphosphate biosynthesis via DXP pathway; isopentenyl diphosphate from 1-deoxy-D-xylulose 5-phosphate: step 6/6. Its function is as follows. Catalyzes the conversion of 1-hydroxy-2-methyl-2-(E)-butenyl 4-diphosphate (HMBPP) into a mixture of isopentenyl diphosphate (IPP) and dimethylallyl diphosphate (DMAPP). Acts in the terminal step of the DOXP/MEP pathway for isoprenoid precursor biosynthesis. This Cereibacter sphaeroides (strain ATCC 17025 / ATH 2.4.3) (Rhodobacter sphaeroides) protein is 4-hydroxy-3-methylbut-2-enyl diphosphate reductase.